The sequence spans 462 residues: UDP-N-acetylmuramoylalanine--D-glutamate ligase (462 aa).

118 to 124 (GTNGKST) is a binding site for ATP.

Belongs to the MurCDEF family.

Its subcellular location is the cytoplasm. The catalysed reaction is UDP-N-acetyl-alpha-D-muramoyl-L-alanine + D-glutamate + ATP = UDP-N-acetyl-alpha-D-muramoyl-L-alanyl-D-glutamate + ADP + phosphate + H(+). The protein operates within cell wall biogenesis; peptidoglycan biosynthesis. In terms of biological role, cell wall formation. Catalyzes the addition of glutamate to the nucleotide precursor UDP-N-acetylmuramoyl-L-alanine (UMA). This chain is UDP-N-acetylmuramoylalanine--D-glutamate ligase, found in Anaeromyxobacter dehalogenans (strain 2CP-C).